The following is a 371-amino-acid chain: Germination protease (371 aa).

Residues 1–16 constitute a propeptide that is removed on maturation; the sequence is MEKQKLDLSAYQIRTD.

The protein belongs to the peptidase A25 family. In terms of assembly, homotetramer. Post-translationally, autoproteolytically processed. The inactive tetrameric zymogen termed p46 autoprocesses to a smaller form termed p41, which is active only during spore germination.

It carries out the reaction Endopeptidase action with P4 Glu or Asp, P1 preferably Glu &gt; Asp, P1' hydrophobic and P2' Ala.. Functionally, initiates the rapid degradation of small, acid-soluble proteins during spore germination. The sequence is that of Germination protease from Bacillus pumilus (strain SAFR-032).